A 201-amino-acid polypeptide reads, in one-letter code: UPF0301 protein Rleg2_0617 (201 aa).

The protein belongs to the UPF0301 (AlgH) family.

This is UPF0301 protein Rleg2_0617 from Rhizobium leguminosarum bv. trifolii (strain WSM2304).